The following is a 489-amino-acid chain: Mitochondrial distribution and morphology protein 12 (489 aa).

The SMP-LTD domain occupies 1-489; the sequence is MSIDLNWEAA…VFPSFWTFLV (489 aa). The segment covering 72 to 82 has biased composition (acidic residues); it reads ESDSEDEDEGH. 3 disordered regions span residues 72 to 97, 201 to 313, and 394 to 432; these read ESDS…AAAD, WPDA…MRER, and DINH…QPRR. Polar residues predominate over residues 231–249; that stretch reads LDTGSPSRPSTANTNPTQL. Low complexity-rich tracts occupy residues 250–265 and 398–424; these read SHGQ…NTSN and QQRQ…NNPE.

This sequence belongs to the MDM12 family. In terms of assembly, component of the ER-mitochondria encounter structure (ERMES) or MDM complex, composed of MMM1, MDM10, mdm12 and MDM34. An MMM1 homodimer associates with one molecule of mdm12 on each side in a pairwise head-to-tail manner, and the SMP-LTD domains of MMM1 and mdm12 generate a continuous hydrophobic tunnel for phospholipid trafficking.

Its subcellular location is the mitochondrion outer membrane. It is found in the endoplasmic reticulum membrane. In terms of biological role, component of the ERMES/MDM complex, which serves as a molecular tether to connect the endoplasmic reticulum (ER) and mitochondria. Components of this complex are involved in the control of mitochondrial shape and protein biogenesis, and function in nonvesicular lipid trafficking between the ER and mitochondria. mdm12 is required for the interaction of the ER-resident membrane protein MMM1 and the outer mitochondrial membrane-resident beta-barrel protein MDM10. The mdm12-MMM1 subcomplex functions in the major beta-barrel assembly pathway that is responsible for biogenesis of all mitochondrial outer membrane beta-barrel proteins, and acts in a late step after the SAM complex. The MDM10-mdm12-MMM1 subcomplex further acts in the TOM40-specific pathway after the action of the mdm12-MMM1 complex. Essential for establishing and maintaining the structure of mitochondria and maintenance of mtDNA nucleoids. The chain is Mitochondrial distribution and morphology protein 12 from Talaromyces marneffei (strain ATCC 18224 / CBS 334.59 / QM 7333) (Penicillium marneffei).